Reading from the N-terminus, the 126-residue chain is Hydrogenase maturation factor HypA (126 aa).

Histidine 2 contacts Ni(2+). Residues cysteine 78, cysteine 81, cysteine 97, and cysteine 100 each contribute to the Zn(2+) site.

This sequence belongs to the HypA/HybF family.

In terms of biological role, involved in the maturation of [NiFe] hydrogenases. Required for nickel insertion into the metal center of the hydrogenase. This Methanococcus maripaludis (strain C5 / ATCC BAA-1333) protein is Hydrogenase maturation factor HypA.